A 146-amino-acid chain; its full sequence is Probable flagellum biosynthesis repressor protein FlbT 1 (146 aa).

The protein belongs to the FlbT family.

Has a post-transcriptional repressor function in flagellum biogenesis. Associates with the 5'-UTR of fljK mRNA and promotes its degradation. In Bradyrhizobium diazoefficiens (strain JCM 10833 / BCRC 13528 / IAM 13628 / NBRC 14792 / USDA 110), this protein is Probable flagellum biosynthesis repressor protein FlbT 1.